A 160-amino-acid chain; its full sequence is Small ribosomal subunit protein uS7 (160 aa).

This sequence belongs to the universal ribosomal protein uS7 family. In terms of assembly, part of the 30S ribosomal subunit. Contacts proteins S9 and S11.

Its function is as follows. One of the primary rRNA binding proteins, it binds directly to 16S rRNA where it nucleates assembly of the head domain of the 30S subunit. Is located at the subunit interface close to the decoding center, probably blocks exit of the E-site tRNA. This Rickettsia prowazekii (strain Madrid E) protein is Small ribosomal subunit protein uS7.